A 353-amino-acid chain; its full sequence is tRNA N6-adenosine threonylcarbamoyltransferase (353 aa).

The Fe cation site is built by His109 and His113. Residues 136–140 (TVSGG), Asp169, Gly182, Asp186, and Asn284 each bind substrate. Fe cation is bound at residue Asp312.

Belongs to the KAE1 / TsaD family. Requires Fe(2+) as cofactor.

The protein resides in the cytoplasm. The enzyme catalyses L-threonylcarbamoyladenylate + adenosine(37) in tRNA = N(6)-L-threonylcarbamoyladenosine(37) in tRNA + AMP + H(+). Its function is as follows. Required for the formation of a threonylcarbamoyl group on adenosine at position 37 (t(6)A37) in tRNAs that read codons beginning with adenine. Is involved in the transfer of the threonylcarbamoyl moiety of threonylcarbamoyl-AMP (TC-AMP) to the N6 group of A37, together with TsaE and TsaB. TsaD likely plays a direct catalytic role in this reaction. This chain is tRNA N6-adenosine threonylcarbamoyltransferase, found in Chlorobium phaeobacteroides (strain DSM 266 / SMG 266 / 2430).